We begin with the raw amino-acid sequence, 860 residues long: Alanine--tRNA ligase (860 aa).

The Zn(2+) site is built by His553, His557, Cys655, and His659.

It belongs to the class-II aminoacyl-tRNA synthetase family. The cofactor is Zn(2+).

The protein localises to the cytoplasm. The catalysed reaction is tRNA(Ala) + L-alanine + ATP = L-alanyl-tRNA(Ala) + AMP + diphosphate. In terms of biological role, catalyzes the attachment of alanine to tRNA(Ala) in a two-step reaction: alanine is first activated by ATP to form Ala-AMP and then transferred to the acceptor end of tRNA(Ala). Also edits incorrectly charged Ser-tRNA(Ala) and Gly-tRNA(Ala) via its editing domain. The sequence is that of Alanine--tRNA ligase from Legionella pneumophila (strain Paris).